A 285-amino-acid chain; its full sequence is Shikimate dehydrogenase (NADP(+)) (285 aa).

Residues Ser22–Ser24 and Thr71 each bind shikimate. Lys75 acts as the Proton acceptor in catalysis. Shikimate-binding residues include Asn96 and Asp111. Residues Gly136–Ala140, Asn160–Arg165, and Ile225 contribute to the NADP(+) site. Residue Tyr227 participates in shikimate binding. Gly248 contacts NADP(+).

It belongs to the shikimate dehydrogenase family. As to quaternary structure, homodimer.

The catalysed reaction is shikimate + NADP(+) = 3-dehydroshikimate + NADPH + H(+). It participates in metabolic intermediate biosynthesis; chorismate biosynthesis; chorismate from D-erythrose 4-phosphate and phosphoenolpyruvate: step 4/7. Involved in the biosynthesis of the chorismate, which leads to the biosynthesis of aromatic amino acids. Catalyzes the reversible NADPH linked reduction of 3-dehydroshikimate (DHSA) to yield shikimate (SA). This is Shikimate dehydrogenase (NADP(+)) from Rhizobium etli (strain CIAT 652).